The chain runs to 98 residues: Citrate lyase acyl carrier protein (98 aa).

An O-(phosphoribosyl dephospho-coenzyme A)serine modification is found at Ser-14.

This sequence belongs to the CitD family. As to quaternary structure, oligomer with a subunit composition of (alpha,beta,gamma)6.

It localises to the cytoplasm. Functionally, covalent carrier of the coenzyme of citrate lyase. The protein is Citrate lyase acyl carrier protein of Citrobacter koseri (strain ATCC BAA-895 / CDC 4225-83 / SGSC4696).